A 419-amino-acid chain; its full sequence is MGEKKPEPLDFVKDFQEYLTQQTHHVNMISGSVSGDKEAETLQGAGTDGDQNGLDHPSVEVSLDENSGMLVDGFERTFDGKLKCRYCNYASKGTARLIEHIRIHTGEKPHRCHLCPFASAYERHLEAHMRSHTGEKPYKCELCSFRCSDRSNLSHHRRRKHKMVPIKGTRSSLSSKKMWGVLQKKTSNLGYSRRALINLSPPSMVVQKPDYLNDFTHEIPNIQTDSYEAMAKTTPTGGLPRDPQELMVDNPLNQLSTLAGQLSSLPPENQNPASPDVDACPDEKPFMIQQPSAQAVVSAVSASIPQSSSPTSPEPRPSHSQRNYSPVAGPSSEPSAHTSTPSIGNSQPSTPAPTLPVQDPQLLHHCQHCDVYFADNVLYTVHMGCHGYDSPFQCNVCGCKCKDKYDFACHFARGQHNQH.

Lys5 is covalently cross-linked (Glycyl lysine isopeptide (Lys-Gly) (interchain with G-Cter in SUMO2)). Positions 36-55 (DKEAETLQGAGTDGDQNGLD) are disordered. 3 C2H2-type zinc fingers span residues 82–104 (LKCR…IRIH), 110–132 (HRCH…MRSH), and 138–161 (YKCE…RRKH). Lys185 participates in a covalent cross-link: Glycyl lysine isopeptide (Lys-Gly) (interchain with G-Cter in SUMO2). Positions 262–273 (LSSLPPENQNPA) are enriched in polar residues. Disordered regions lie at residues 262–284 (LSSL…PDEK) and 297–356 (VSAV…PTLP). Positions 297 to 311 (VSAVSASIPQSSSPT) are enriched in low complexity. Residues 332–349 (SEPSAHTSTPSIGNSQPS) are compositionally biased toward polar residues. 2 consecutive C2H2-type zinc fingers follow at residues 364–386 (HHCQ…MGCH) and 392–416 (FQCN…RGQH).

Belongs to the Ikaros C2H2-type zinc-finger protein family. In terms of assembly, self-associates. Interacts with other family members; IKZF1, IKZF2, IKZF3 and IKZF4.

It is found in the nucleus. Transcriptional repressor that binds the core 5'GNNTGTNG-3' DNA consensus sequence. Involved in megakaryocyte differentiation. This is Zinc finger protein Pegasus (Ikzf5) from Mus musculus (Mouse).